The sequence spans 268 residues: Secreted RxLR effector protein 32 (268 aa).

A signal peptide spans 1–21; it reads MRGAYYVAFALLVAASTRTAA. The short motif at 50-71 is the RxLR-dEER element; that stretch reads RILRESPDPKDRLPVYASDEER. Residues 120 to 257 are disordered; that stretch reads PKLEIKKSKR…PTPESLGIGG (138 aa). Over residues 148-161 the composition is skewed to low complexity; sequence SNSKKSLVSSASAK. A compositionally biased stretch (basic and acidic residues) spans 212–224; it reads NLDKNKRPDEAKI.

Belongs to the RxLR effector family.

It is found in the secreted. The protein localises to the host cell. Secreted effector that completely suppresses the host cell death induced by cell death-inducing proteins. The polypeptide is Secreted RxLR effector protein 32 (Plasmopara viticola (Downy mildew of grapevine)).